The chain runs to 469 residues: MTSQLHKKGEAWSARFSEPMSELVKRYTSSVFFDKRLALVDIAGSLAHANMLAAQKIISADDLAAIERGMAQIKGEIERGEFEWQLDLEDVHLNIEARLTALIGDAGKRLHTGRSRNDQVATDIRLWLRGEIDRIGGLLNDLRGALIDLAEQNADTIMPGFTHLQVAQPVTFGHHLLAYVEMFTRDAERMRDCRTRVNRLPLGAAALAGTSYSIDRHAVAKTLGFDGICANSLDAVSDRDFAIEFTAASALVMTHVSRFSEELVLWMSPRVGFIDIADRFCTGSSIMPQKKNPDVPELARGKTGRVNGHLMALLTLMKGQPLAYNKDNQEDKEPLFDTVDTVADTLRIFAEMAAGITVKPDAMRAAALQGFSTATDLADYLVKRGLPFRDAHEAVAHAVKICDDRGIDLADLTLDEMKQELPNVAHLIGDDVFGYLTLEGSVASRNHPGGTAPDQVRAAVKAARAALAK.

This sequence belongs to the lyase 1 family. Argininosuccinate lyase subfamily.

The protein resides in the cytoplasm. The catalysed reaction is 2-(N(omega)-L-arginino)succinate = fumarate + L-arginine. It functions in the pathway amino-acid biosynthesis; L-arginine biosynthesis; L-arginine from L-ornithine and carbamoyl phosphate: step 3/3. This chain is Argininosuccinate lyase, found in Burkholderia orbicola (strain MC0-3).